The sequence spans 246 residues: 1-(5-phosphoribosyl)-5-[(5-phosphoribosylamino)methylideneamino] imidazole-4-carboxamide isomerase (246 aa).

The active-site Proton acceptor is the aspartate 8. Aspartate 130 (proton donor) is an active-site residue.

Belongs to the HisA/HisF family.

The protein resides in the cytoplasm. The enzyme catalyses 1-(5-phospho-beta-D-ribosyl)-5-[(5-phospho-beta-D-ribosylamino)methylideneamino]imidazole-4-carboxamide = 5-[(5-phospho-1-deoxy-D-ribulos-1-ylimino)methylamino]-1-(5-phospho-beta-D-ribosyl)imidazole-4-carboxamide. The protein operates within amino-acid biosynthesis; L-histidine biosynthesis; L-histidine from 5-phospho-alpha-D-ribose 1-diphosphate: step 4/9. The sequence is that of 1-(5-phosphoribosyl)-5-[(5-phosphoribosylamino)methylideneamino] imidazole-4-carboxamide isomerase from Hydrogenovibrio crunogenus (strain DSM 25203 / XCL-2) (Thiomicrospira crunogena).